The chain runs to 482 residues: E3 ubiquitin-protein ligase parkin (482 aa).

The 70-residue stretch at Leu30–Ile99 folds into the Ubiquitin-like domain. Ser94 is subject to Phosphoserine; by Pink1. The RING-type 0; atypical zinc finger occupies Ala157–Pro246. Zn(2+) contacts are provided by Cys163, Cys166, Cys178, and Cys181. Thr187 is modified (phosphothreonine; by Pink1). Residues Cys208, Cys232, His235, Cys259, Cys262, Cys274, His278, Cys281, Cys284, Cys310, Cys314, Cys353, Cys358, Cys373, Cys377, Cys382, Cys385, His390, Cys394, Cys436, and Cys439 each contribute to the Zn(2+) site. Positions Lys255 to Gly482 are TRIAD supradomain. An RING-type 1 zinc finger spans residues Cys259 to Cys314. 2 IBR-type zinc fingers span residues Asp334–Cys394 and Ser432–Arg473. The RING-type 2; atypical zinc-finger motif lies at Cys436–Cys467. Cys449 is a catalytic residue. Cys454, Cys459, Cys464, Cys467, Cys475, and His479 together coordinate Zn(2+).

It belongs to the RBR family. Parkin subfamily. In terms of assembly, forms an E3 ubiquitin ligase complex with E2 ubiquitin-conjugating enzymes. Interacts with Pink1. Interacts with Marf. Interacts with Paris. Interacts with septins Septin1 and pnut. In terms of processing, auto-ubiquitinates in an E2-dependent manner leading to its own degradation. Post-translationally, phosphorylated. Activation requires phosphorylation at Ser-94 by Pink1 and binding to Pink1-phosphorylated polyubiquitin chains. Phosphorylation at Thr-187 by Pink1 is also important for mitochondrial localization. In terms of tissue distribution, in oocytes, accumulates in early egg chambers where it is enriched until stages 9-10, localizing mainly to the posterior pole and anterior margin (at protein level). After stage 10 it is no longer detected in the oocyte (at protein level). In embryos, ubiquitously expressed in the early stages (stages 2 to 5) (at protein level). Expression levels decrease at later stages and becomes restricted to the brain and nerve cord from stage 9 (at protein level). Relatively higher levels of expression in the head compared to the body. Enriched in the dorsomedial (DM) dopaminergic neurons.

The protein resides in the mitochondrion. Its subcellular location is the cytoplasm. It localises to the cytosol. It catalyses the reaction [E2 ubiquitin-conjugating enzyme]-S-ubiquitinyl-L-cysteine + [acceptor protein]-L-lysine = [E2 ubiquitin-conjugating enzyme]-L-cysteine + [acceptor protein]-N(6)-ubiquitinyl-L-lysine.. Its pathway is protein modification; protein ubiquitination. Its activity is regulated as follows. In the autoinhibited state the side chain of Phe-481 inserts into a hydrophobic groove in RING-0, occluding the ubiquitin acceptor site Cys-449, whereas the REP repressor element binds RING-1 and blocks its E2-binding site. Activation of park requires 2 steps: (1) phosphorylation at Ser-94 by Pink1 and (2) binding to phosphorylated ubiquitin, leading to unlock repression of the catalytic Cys-449 by the RING-0 region via an allosteric mechanism and converting park to its fully-active form. According to another report, phosphorylation at Ser-94 by Pink1 is not essential for activation and only binding to phosphorylated ubiquitin is essential to unlock repression. In terms of biological role, E3 ubiquitin-protein ligase which accepts ubiquitin from E2 ubiquitin-conjugating enzymes in the form of a thioester and then directly transfers the ubiquitin to targeted substrates, such as Paris, Marf, Opa1, Miro, pnut, Septin1, Tom20 and porin. Mediates monoubiquitination as well as 'Lys-6', 'Lys-11', 'Lys-48'-linked and 'Lys-63'-linked polyubiquitination of substrates, depending on the context. Protects against mitochondrial dysfunction during cellular stress, by acting downstream of Pink1, to coordinate mitochondrial quality control mechanisms that remove and replace dysfunctional mitochondrial components. Depending on the severity of mitochondrial damage and/or dysfunction, activity ranges from preventing apoptosis and stimulating mitochondrial biogenesis to regulating mitochondrial dynamics and eliminating severely damaged mitochondria via mitophagy. Appears to be particularly important in maintaining the physiology and function of cells with high energy demands that are undergoing stress or altered metabolic environment, including spermatids, muscle cells and neurons such as the dopaminergic (DA) neurons. Activation and recruitment onto the outer membrane of damaged/dysfunctional mitochondria (OMM) requires Pink1-mediated phosphorylation of both park and ubiquitin. In depolarized mitochondria, mediates the decision between mitophagy or preventing apoptosis by inducing either the poly- or monoubiquitination of porin/VDAC; polyubiquitination of porin promotes mitophagy, while monoubiquitination of porin decreases mitochondrial calcium influx which ultimately inhibits apoptosis. When cellular stress results in irreversible mitochondrial damage, promotes the autophagic degradation of dysfunctional depolarized mitochondria (mitophagy) by promoting the ubiquitination of mitochondrial proteins. Preferentially assembles 'Lys-6'-, 'Lys-11'- and 'Lys-63'-linked polyubiquitin chains following mitochondrial damage, leading to mitophagy. In developing tissues, inhibits JNK-mediated apoptosis by negatively regulating bsk transcription. The Pink1-park pathway also promotes fission and/or inhibits fusion of damaged mitochondria by mediating the ubiquitination and subsequent degradation of proteins involved in mitochondrial fusion/fission such as Marf, Opa1 and fzo. This prevents the refusion of unhealthy mitochondria with the healthy mitochondrial network and/or initiates mitochondrial fragmentation facilitating their later engulfment by autophagosomes. Regulates motility of damaged mitochondria by phosphorylating Miro which likely promotes its park-dependent degradation by the proteasome; in motor neurons, this inhibits mitochondrial intracellular anterograde transport along the axons which probably increases the chance of the mitochondria being eliminated in the soma. The Pink1-park pathway is also involved in mitochondrial regeneration processes such as promoting mitochondrial biogenesis, activating localized mitochondrial repair, promoting selective turnover of mitochondrial proteins and initiating the mitochondrial import of endogenous proteins. Involved in mitochondrial biogenesis via the ubiquitination of transcriptional repressor Paris which leads to its subsequent proteasomal degradation and allows activation of the transcription factor srl. Promotes localized mitochondrial repair by activating the translation of specific nuclear-encoded mitochondrial RNAs (nc-mtRNAs) on the mitochondrial surface, including several key electron transport chain component nc-mtRNAs. In Drosophila melanogaster (Fruit fly), this protein is E3 ubiquitin-protein ligase parkin.